We begin with the raw amino-acid sequence, 339 residues long: Dehydrogenase/reductase SDR family member 7 (339 aa).

Residues 1–28 form the signal peptide; sequence MNWELLLWLLVLCALLLLLVQLLRFLRA. Serine 60 and isoleucine 62 together coordinate NAD(+). Substrate is bound at residue serine 190. Residues tyrosine 203, lysine 207, and serine 239 each coordinate NAD(+). The active-site Proton acceptor is tyrosine 203.

The protein belongs to the short-chain dehydrogenases/reductases (SDR) family. In terms of tissue distribution, found predominantly in the adrenal glands, liver, thyroid, prostate, small intestine, colon, stomach, kidney and brain. Lower levels observed in skeletal muscle, the lung and the spleen.

The protein resides in the endoplasmic reticulum membrane. It carries out the reaction all-trans-retinol + NADP(+) = all-trans-retinal + NADPH + H(+). The catalysed reaction is 5alpha-androstane-3alpha,17beta-diol + NADP(+) = 17beta-hydroxy-5alpha-androstan-3-one + NADPH + H(+). NADPH-dependent oxidoreductase which catalyzes the reduction of a variety of compounds bearing carbonyl groups including steroids, retinoids and xenobiotics. Catalyzes the reduction/inactivation of 5alpha-dihydrotestosterone to 3alpha-androstanediol, with a possible role in the modulation of androgen receptor function. Involved in the reduction of all-trans-retinal to all-trans-retinol. Converts cortisone to 20beta-dihydrocortisone in vitro, although the physiological relevance of this activity is questionable. Reduces exogenous compounds such as quinones (1,2-naphtoquinone, 9,10-phenantrenequinone and benzoquinone) and other xenobiotics (alpha-diketones) in vitro, suggesting a role in the biotransformation of xenobiotics with carbonyl group. A dehydrogenase activity has not been detected so far. May play a role as tumor suppressor. This Homo sapiens (Human) protein is Dehydrogenase/reductase SDR family member 7.